Reading from the N-terminus, the 35-residue chain is Photosystem II reaction center protein T (35 aa).

Residues 3-23 traverse the membrane as a helical segment; the sequence is ALVYTFLLVSTLGIIFFAIFF.

Belongs to the PsbT family. In terms of assembly, PSII is composed of 1 copy each of membrane proteins PsbA, PsbB, PsbC, PsbD, PsbE, PsbF, PsbH, PsbI, PsbJ, PsbK, PsbL, PsbM, PsbT, PsbY, PsbZ, Psb30/Ycf12, at least 3 peripheral proteins of the oxygen-evolving complex and a large number of cofactors. It forms dimeric complexes.

It is found in the plastid. Its subcellular location is the chloroplast thylakoid membrane. Its function is as follows. Found at the monomer-monomer interface of the photosystem II (PS II) dimer, plays a role in assembly and dimerization of PSII. PSII is a light-driven water plastoquinone oxidoreductase, using light energy to abstract electrons from H(2)O, generating a proton gradient subsequently used for ATP formation. This chain is Photosystem II reaction center protein T, found in Pisum sativum (Garden pea).